The sequence spans 63 residues: ATP synthase membrane subunit K, mitochondrial (63 aa).

Residues 15–37 (TMRGRANVAKATWASLGLVYVLV) traverse the membrane as a helical segment.

F-type ATPases have 2 components, CF(1) - the catalytic core - and CF(0) - the membrane proton channel. CF(1) has five subunits: alpha(3), beta(3), gamma(1), delta(1), epsilon(1). CF(0) has three main subunits: a, b and c. The ATP synthase complex/complex V exists as a monomeric and a dimeric supercomplex that helps shape mitochondrial cristae to optimize proton flow.

The protein resides in the mitochondrion membrane. Its function is as follows. Mitochondrial membrane ATP synthase (F(1)F(0) ATP synthase or Complex V) produces ATP from ADP in the presence of a proton gradient across the membrane which is generated by electron transport complexes of the respiratory chain. F-type ATPases consist of two structural domains, F(1) - containing the extramembraneous catalytic core and F(0) - containing the membrane proton channel, linked together by a central stalk and a peripheral stalk. During catalysis, ATP synthesis in the catalytic domain of F(1) is coupled via a rotary mechanism of the central stalk subunits to proton translocation. ATP5MK is a minor subunit of the mitochondrial membrane ATP synthase required for dimerization of the ATP synthase complex and as such regulates ATP synthesis in the mitochondria. The sequence is that of ATP synthase membrane subunit K, mitochondrial from Drosophila melanogaster (Fruit fly).